A 243-amino-acid polypeptide reads, in one-letter code: GrpE protein homolog, mitochondrial (243 aa).

The interval Thr-42 to Ala-75 is disordered. Residues Ala-44–Glu-55 are compositionally biased toward basic and acidic residues.

This sequence belongs to the GrpE family. Component of the PAM complex, at least composed of mtHsp70, MGE1, TIM44, PAM16, PAM17 and PAM18.

The protein localises to the mitochondrion matrix. Functionally, essential component of the PAM complex, a complex required for the translocation of transit peptide-containing proteins from the inner membrane into the mitochondrial matrix in an ATP-dependent manner. Seems to control the nucleotide-dependent binding of SSC1 to substrate proteins. The polypeptide is GrpE protein homolog, mitochondrial (mge1) (Debaryomyces hansenii (strain ATCC 36239 / CBS 767 / BCRC 21394 / JCM 1990 / NBRC 0083 / IGC 2968) (Yeast)).